Consider the following 397-residue polypeptide: Elongation factor Tu (397 aa).

The 197-residue stretch at Lys-10 to Glu-206 folds into the tr-type G domain. Residues Gly-19–Thr-26 form a G1 region. Gly-19–Thr-26 provides a ligand contact to GTP. Residue Thr-26 participates in Mg(2+) binding. The G2 stretch occupies residues Gly-62 to Gln-66. Residues Asp-83–Gly-86 are G3. GTP is bound by residues Asp-83–His-87 and Asn-138–Asp-141. The interval Asn-138–Asp-141 is G4. The segment at Ser-176–Leu-178 is G5.

It belongs to the TRAFAC class translation factor GTPase superfamily. Classic translation factor GTPase family. EF-Tu/EF-1A subfamily. In terms of assembly, monomer.

It localises to the cytoplasm. It carries out the reaction GTP + H2O = GDP + phosphate + H(+). In terms of biological role, GTP hydrolase that promotes the GTP-dependent binding of aminoacyl-tRNA to the A-site of ribosomes during protein biosynthesis. This Saccharopolyspora erythraea (strain ATCC 11635 / DSM 40517 / JCM 4748 / NBRC 13426 / NCIMB 8594 / NRRL 2338) protein is Elongation factor Tu.